A 285-amino-acid polypeptide reads, in one-letter code: MATKLQDGNTPCLAATPSEPRPTVLVFDSGVGGLSVYDEIRHLLPDLHYIYAFDNVAFPYGEKNEDFIVERVVEIVTAVQERYPLALAVVACNTASTVSLPALREKFAFPVVGVVPAIKPAARLTANGIVGLLATRGTVKRSYTHELIARFANECQIEMLGSAEMVELAEAKLHGEDVSLDALKRILRPWLRMKEPPDTVVLGCTHFPLLQEELLQVLPEGTRLVDSGAAIARRTAWLLEHEAPDAKSADANIAFCMDMTPEAEQLLPVLQRYGFKTLEKLAVSG.

Substrate contacts are provided by residues 28 to 29 and 60 to 61; these read DS and YG. Cys92 acts as the Proton donor/acceptor in catalysis. 93 to 94 provides a ligand contact to substrate; it reads NT. Catalysis depends on Cys204, which acts as the Proton donor/acceptor. 205–206 lines the substrate pocket; sequence TH.

This sequence belongs to the aspartate/glutamate racemases family.

The enzyme catalyses L-glutamate = D-glutamate. It functions in the pathway cell wall biogenesis; peptidoglycan biosynthesis. Functionally, provides the (R)-glutamate required for cell wall biosynthesis. The chain is Glutamate racemase from Escherichia fergusonii (strain ATCC 35469 / DSM 13698 / CCUG 18766 / IAM 14443 / JCM 21226 / LMG 7866 / NBRC 102419 / NCTC 12128 / CDC 0568-73).